Reading from the N-terminus, the 146-residue chain is Hemoglobin subunit beta-1 (146 aa).

Residues 2 to 146 (HWTEKERTII…VVSALGKQYH (145 aa)) enclose the Globin domain. Heme b-binding residues include His63 and His92.

The protein belongs to the globin family. Hb1 is a heterotetramer of two alpha chains and two beta-1 chains. As to expression, red blood cells.

Involved in oxygen transport from gills to the various peripheral tissues. This is Hemoglobin subunit beta-1 from Dissostichus eleginoides (Patagonian toothfish).